The sequence spans 1358 residues: DNA-directed RNA polymerase subunit beta (1358 aa).

This sequence belongs to the RNA polymerase beta chain family. The RNAP catalytic core consists of 2 alpha, 1 beta, 1 beta' and 1 omega subunit. When a sigma factor is associated with the core the holoenzyme is formed, which can initiate transcription.

The enzyme catalyses RNA(n) + a ribonucleoside 5'-triphosphate = RNA(n+1) + diphosphate. In terms of biological role, DNA-dependent RNA polymerase catalyzes the transcription of DNA into RNA using the four ribonucleoside triphosphates as substrates. The polypeptide is DNA-directed RNA polymerase subunit beta (Francisella tularensis subsp. tularensis (strain FSC 198)).